We begin with the raw amino-acid sequence, 92 residues long: MEFLLQLENILKKRKQDLPDKSYTADLFRGGVDRILKKVGEEAGEVIIAAKNSDKKELTHEAADLLFHLQVLLVEQELSLQDVVEELRKRHS.

It belongs to the PRA-PH family.

The protein resides in the cytoplasm. The enzyme catalyses 1-(5-phospho-beta-D-ribosyl)-ATP + H2O = 1-(5-phospho-beta-D-ribosyl)-5'-AMP + diphosphate + H(+). It participates in amino-acid biosynthesis; L-histidine biosynthesis; L-histidine from 5-phospho-alpha-D-ribose 1-diphosphate: step 2/9. The protein is Phosphoribosyl-ATP pyrophosphatase of Leptospira borgpetersenii serovar Hardjo-bovis (strain JB197).